The following is a 529-amino-acid chain: Bifunctional purine biosynthesis protein PurH (529 aa).

Positions 1-148 constitute an MGS-like domain; it reads MQQRRPIRRA…KNHKDVAIVV (148 aa). Residue K287 is modified to N6-acetyllysine.

It belongs to the PurH family.

It catalyses the reaction (6R)-10-formyltetrahydrofolate + 5-amino-1-(5-phospho-beta-D-ribosyl)imidazole-4-carboxamide = 5-formamido-1-(5-phospho-D-ribosyl)imidazole-4-carboxamide + (6S)-5,6,7,8-tetrahydrofolate. The catalysed reaction is IMP + H2O = 5-formamido-1-(5-phospho-D-ribosyl)imidazole-4-carboxamide. The protein operates within purine metabolism; IMP biosynthesis via de novo pathway; 5-formamido-1-(5-phospho-D-ribosyl)imidazole-4-carboxamide from 5-amino-1-(5-phospho-D-ribosyl)imidazole-4-carboxamide (10-formyl THF route): step 1/1. It functions in the pathway purine metabolism; IMP biosynthesis via de novo pathway; IMP from 5-formamido-1-(5-phospho-D-ribosyl)imidazole-4-carboxamide: step 1/1. The protein is Bifunctional purine biosynthesis protein PurH of Escherichia coli O139:H28 (strain E24377A / ETEC).